We begin with the raw amino-acid sequence, 245 residues long: 1-(5-phosphoribosyl)-5-[(5-phosphoribosylamino)methylideneamino] imidazole-4-carboxamide isomerase (245 aa).

Residue aspartate 7 is the Proton acceptor of the active site. The active-site Proton donor is aspartate 129.

This sequence belongs to the HisA/HisF family.

The protein localises to the cytoplasm. It catalyses the reaction 1-(5-phospho-beta-D-ribosyl)-5-[(5-phospho-beta-D-ribosylamino)methylideneamino]imidazole-4-carboxamide = 5-[(5-phospho-1-deoxy-D-ribulos-1-ylimino)methylamino]-1-(5-phospho-beta-D-ribosyl)imidazole-4-carboxamide. It participates in amino-acid biosynthesis; L-histidine biosynthesis; L-histidine from 5-phospho-alpha-D-ribose 1-diphosphate: step 4/9. This is 1-(5-phosphoribosyl)-5-[(5-phosphoribosylamino)methylideneamino] imidazole-4-carboxamide isomerase from Shewanella loihica (strain ATCC BAA-1088 / PV-4).